The sequence spans 1380 residues: Mitogen-activated protein kinase kinase kinase 5 (1380 aa).

The segment at 30 to 97 (CRRGGGAATA…GNSGSGGGRR (68 aa)) is disordered. Over residues 37–49 (ATAAEGEPSLQPL) the composition is skewed to low complexity. The span at 50–59 (LVPPPPPPPG) shows a compositional bias: pro residues. Asymmetric dimethylarginine is present on residues R85 and R87. Position 90 is a phosphoserine; by PIM1 and PKB/AKT1 (S90). The tract at residues 649–1374 (HCKRFFEMVN…MLCTLWKAII (726 aa)) is interaction with PPIA/CYPA. Residues 687-945 (NGDRVVLGKG…ANDLLIDEFL (259 aa)) enclose the Protein kinase domain. Residues 693 to 701 (LGKGTYGIV) and K716 contribute to the ATP site. At Y725 the chain carries Phosphotyrosine. D810 acts as the Proton acceptor in catalysis. A Phosphothreonine; by autocatalysis modification is found at T820. T845 bears the Phosphothreonine; by autocatalysis, MELK and MAP3K6 mark. T849 bears the Phosphothreonine; by autocatalysis mark. S965 is modified (phosphoserine). S973 carries the phosphoserine; by autocatalysis modification. Phosphoserine occurs at positions 1036 and 1040. The tract at residues 1188–1215 (ASESDTADPEDLDVEDEHEELSSNQTVR) is disordered. Acidic residues predominate over residues 1192–1206 (DTADPEDLDVEDEHE). Residues 1252 to 1292 (LGRMKIETNRLLEELVRKERELQALLHQAIEEKDQEIRHLK) are a coiled coil.

The protein belongs to the protein kinase superfamily. STE Ser/Thr protein kinase family. MAP kinase kinase kinase subfamily. As to quaternary structure, homodimer when inactive. Binds both upstream activators and downstream substrates in multimolecular complexes. Part of a cytoplasmic complex made of HIPK1, DAB2IP and MAP3K5 in response to TNF. This complex formation promotes MAP3K5-JNK activation and subsequent apoptosis. Interacts with SOCS1 which recognizes phosphorylation of Tyr-725 and induces MAP3K5/ASK1 degradation in endothelial cells. Interacts with the 14-3-3 family proteins such as YWHAB, YWHAE, YWHAQ, YWHAH, YWHAZ and SFN. Interacts with ARRB2, BIRC2, DAB2IP, IGF1R, MAP3K6/ASK2, PIM1, PGAM5, SOCS1, STUB1, TRAF2 and TXN. Interacts with ERN1 in a TRAF2-dependent manner. Interacts with calcineurin subunit PPP3R1, PPP5C, PPM1L and TRAF6. Interacts (via N-terminus) with RAF1 and this interaction inhibits the proapoptotic function of MAP3K5. Interacts with DAB2IP (via N-terminus C2 domain); the interaction occurs in a TNF-alpha-dependent manner. Interacts with DUSP13A; may positively regulate apoptosis. Interacts with PPIA/CYPA. Interacts with PRMT1; the interaction results in MAP3K5 methylation by PRMT1 which inhibits MAP3K5 activation. Interacts with TRAF2; the interaction is inhibited by PRMT1. Interacts with TRIM48. It depends on Mg(2+) as a cofactor. In terms of processing, ser-90 and Ser-1040 are inactivating phosphorylation sites, the former of which is phosphorylated by AKT1. Phosphorylated at Ser-973 which induces association of MAP3K5/ASK1 with the 14-3-3 family proteins and suppresses MAP3K5/ASK1 activity. Calcineurin (CN) dephosphorylates this site. Also dephosphorylated and activated by PGAM5. Phosphorylated at Thr-845 through autophosphorylation and by MAP3K6/ASK2 which leads to activation. Thr-845 is dephosphorylated by PPP5C. Phosphorylation at Ser-973 in response to oxidative stress is negatively regulated by PPIA/CYPA. Ubiquitinated. Tumor necrosis factor (TNF) induces TNFR2-dependent ubiquitination, leading to proteasomal degradation. Ubiquitinated by RC3H2 in a TRIM48-dependent manner. Post-translationally, methylation at Arg-85 and Arg-87 by PRMT1 promotes association of MAP3K5 with thioredoxin and negatively regulates MAP3K5 association with TRAF2, inhibiting MAP3K5 activation. Methylation is blocked by ubiquitination of PRMT1 by TRIM48. Expressed in various adult mouse tissues including heart, brain, lung, liver and kidney.

It localises to the cytoplasm. The protein localises to the endoplasmic reticulum. It carries out the reaction L-seryl-[protein] + ATP = O-phospho-L-seryl-[protein] + ADP + H(+). The catalysed reaction is L-threonyl-[protein] + ATP = O-phospho-L-threonyl-[protein] + ADP + H(+). With respect to regulation, activated by various stressors, including oxidative stress, endoplasmic reticulum stress, and calcium overload, as well as by receptor-mediated inflammatory signals, such as the tumor necrosis factor (TNF) and lipopolysaccharide (LPS). Homophilic association of MAP3K5/ASK1 through the C-terminal coiled-coil domains and the heteromeric complex formation of MAP3K5/ASK1 with the reduced form of thioredoxin (TXN), constitutes an inactive form of the kinase. Upon ROS-induced dissociation of TXN from MAP3K5/ASK1, TRAF2 and TRAF6 are reciprocally recruited to MAP3K5/ASK1 and form the active MAP3K5/ASK1 signalosome, in which TRAF2 and TRAF6 appear to facilitate the active configuration of MAP3K5/ASK1. MAP3K5/ASK1 activity is also regulated through several phosphorylation and dephosphorylation events. Thr-845 is an activating phosphorylation site that is autophosphorylated and phosphorylated by MAP3K6/ASK2 and dephosphorylated by PPP5C. Ser-90 and Ser-1040 are inactivating phosphorylation sites, the former of which is phosphorylated by AKT1. Phosphorylation of Ser-973 induces association of MAP3K5/ASK1 with the 14-3-3 family proteins, which suppresses MAP3K5/ASK1 activity. Calcium/calmodulin-activated protein phosphatase calcineurin (PPP3CA) has been shown to directly dephosphorylate this site. SOCS1 binds to ASK1 by recognizing phosphorylation of Tyr-725 and induces MAP3K5/ASK1 degradation in endothelial cells. Also dephosphorylated and activated by PGAM5. Contains an N-terminal autoinhibitory domain. Functionally, serine/threonine kinase which acts as an essential component of the MAP kinase signal transduction pathway. Plays an important role in the cascades of cellular responses evoked by changes in the environment. Mediates signaling for determination of cell fate such as differentiation and survival. Plays a crucial role in the apoptosis signal transduction pathway through mitochondria-dependent caspase activation. MAP3K5/ASK1 is required for the innate immune response, which is essential for host defense against a wide range of pathogens. Mediates signal transduction of various stressors like oxidative stress as well as by receptor-mediated inflammatory signals, such as the tumor necrosis factor (TNF) or lipopolysaccharide (LPS). Once activated, acts as an upstream activator of the MKK/JNK signal transduction cascade and the p38 MAPK signal transduction cascade through the phosphorylation and activation of several MAP kinase kinases like MAP2K4/SEK1, MAP2K3/MKK3, MAP2K6/MKK6 and MAP2K7/MKK7. These MAP2Ks in turn activate p38 MAPKs and c-jun N-terminal kinases (JNKs). Both p38 MAPK and JNKs control the transcription factors activator protein-1 (AP-1). In Mus musculus (Mouse), this protein is Mitogen-activated protein kinase kinase kinase 5 (Map3k5).